Consider the following 611-residue polypeptide: O-fucosyltransferase 8 (611 aa).

A disordered region spans residues 1 to 29 (MGKQGSPRSPRPETIDKEEKFGRRSLDSL). Residues 10-26 (PRPETIDKEEKFGRRSL) show a composition bias toward basic and acidic residues. A helical; Signal-anchor for type II membrane protein transmembrane segment spans residues 78-98 (IVLMISVTGFIFCMDSIMVSI). 3 N-linked (GlcNAc...) asparagine glycosylation sites follow: Asn-115, Asn-216, and Asn-270. 386-388 (HLR) is a substrate binding site. Asn-506 is a glycosylation site (N-linked (GlcNAc...) asparagine).

Belongs to the glycosyltransferase GT106 family.

The protein resides in the membrane. Its pathway is glycan metabolism. This Arabidopsis thaliana (Mouse-ear cress) protein is O-fucosyltransferase 8.